The sequence spans 324 residues: HTH-type transcriptional regulator CysB (324 aa).

Residues 1 to 59 (MKLQQLRYIVEVVNHNLNVSSTAEGLYTSQPGISKQVRMLEDELGIQIFARSGKHLTQV) enclose the HTH lysR-type domain. Residues 19–38 (VSSTAEGLYTSQPGISKQVR) constitute a DNA-binding region (H-T-H motif).

It belongs to the LysR transcriptional regulatory family. As to quaternary structure, homotetramer.

It is found in the cytoplasm. Functionally, this protein is a positive regulator of gene expression for the cysteine regulon. The inducer for CysB is N-acetylserine. Thiosulfate and sulfide act as anti-inducers. This is HTH-type transcriptional regulator CysB (cysB) from Klebsiella pneumoniae.